Here is a 472-residue protein sequence, read N- to C-terminus: UDP-glycosyltransferase 100 (472 aa).

The active-site Proton acceptor is His-15. His-15 is an an anthocyanidin binding site. Asp-117 (charge relay) is an active-site residue. Residues Ala-344, Gln-346, His-361, Trp-364, Asn-365, Ser-366, and Glu-369 each contribute to the UDP-alpha-D-glucose site. An an anthocyanidin-binding site is contributed by Gly-384. UDP-alpha-D-glucose contacts are provided by Glu-385 and Gln-386.

It belongs to the UDP-glycosyltransferase family.

The enzyme catalyses (20S)-protopanaxadiol + UDP-alpha-D-glucose = (20S)-ginsenoside C-K + UDP + H(+). It carries out the reaction (20S)-protopanaxatriol + UDP-alpha-D-glucose = (20S)-ginsenoside Rh1 + UDP + H(+). It catalyses the reaction (20S)-ginsenoside F1 + UDP-alpha-D-glucose = (20S)-ginsenoside Rg1 + UDP + H(+). The protein operates within secondary metabolite biosynthesis; terpenoid biosynthesis. Component of the dammarane-type triterpene saponins (e.g. PPT-type ginsenosides or panaxosides) biosynthetic pathway. Glycosyltransferase that catalyzes the biosynthesis of ginsenoside Rh1 from protopanaxatriol (PPT) and the conversion of ginsenoside F1 to ginsenoside Rg1. The chain is UDP-glycosyltransferase 100 from Panax ginseng (Korean ginseng).